A 402-amino-acid polypeptide reads, in one-letter code: UDP-GlcNAc:betaGal beta-1,3-N-acetylglucosaminyltransferase 9 (402 aa).

Residues Met-1–Asp-10 are Cytoplasmic-facing. A helical; Signal-anchor for type II membrane protein membrane pass occupies residues Ala-11–Ala-27. Residues Gln-28–Ser-402 lie on the Lumenal side of the membrane. A compositionally biased stretch (low complexity) spans Ala-32 to Pro-47. A disordered region spans residues Ala-32–Asp-83.

It belongs to the glycosyltransferase 31 family.

It is found in the golgi apparatus membrane. In Homo sapiens (Human), this protein is UDP-GlcNAc:betaGal beta-1,3-N-acetylglucosaminyltransferase 9.